Here is a 126-residue protein sequence, read N- to C-terminus: SOSS complex subunit C homolog (126 aa).

The tract at residues Leu-106–Lys-126 is disordered. Residues Glu-107–Pro-119 are compositionally biased toward pro residues.

It belongs to the SOSS-C family.

The chain is SOSS complex subunit C homolog from Drosophila sechellia (Fruit fly).